The primary structure comprises 281 residues: 2-dehydro-3-deoxyphosphooctonate aldolase (281 aa).

Belongs to the KdsA family.

It localises to the cytoplasm. The enzyme catalyses D-arabinose 5-phosphate + phosphoenolpyruvate + H2O = 3-deoxy-alpha-D-manno-2-octulosonate-8-phosphate + phosphate. It functions in the pathway carbohydrate biosynthesis; 3-deoxy-D-manno-octulosonate biosynthesis; 3-deoxy-D-manno-octulosonate from D-ribulose 5-phosphate: step 2/3. It participates in bacterial outer membrane biogenesis; lipopolysaccharide biosynthesis. The protein is 2-dehydro-3-deoxyphosphooctonate aldolase of Pseudomonas entomophila (strain L48).